A 1085-amino-acid chain; its full sequence is Protein CROWDED NUCLEI 3 (1085 aa).

Coiled coils occupy residues 51-149 and 185-695; these read DEAS…NDLK and RERA…LDVL. Residue K318 forms a Glycyl lysine isopeptide (Lys-Gly) (interchain with G-Cter in ubiquitin) linkage. A Nuclear localization signal motif is present at residues 404-411; sequence AKREAALE. K661 is covalently cross-linked (Glycyl lysine isopeptide (Lys-Gly) (interchain with G-Cter in ubiquitin)). A phosphoserine mark is found at S764, S787, S825, and S843. Disordered regions lie at residues 801 to 997 and 1020 to 1077; these read TVKL…GKAE and NNTG…SIGK. Residues 813–825 are compositionally biased toward basic and acidic residues; the sequence is SLDRVSGEDHEPS. Residues 854–868 are compositionally biased toward basic residues; that stretch reads RRGRGRGRGRGKSVR. Over residues 877–897 the composition is skewed to basic and acidic residues; sequence VSRDSKPSDGETPRKRQREQT. S910 bears the Phosphoserine mark. Positions 932-941 are enriched in polar residues; sequence VSQTPGQTRY. Residues 949-995 show a composition bias toward basic and acidic residues; that stretch reads VGTEEDKAQASKGATEKQERVNDDIRKVPSPKETRTPPEGENRENGK. The segment covering 1045-1066 has biased composition (acidic residues); the sequence is EEDDENISMIEEENEGEEEEET.

This sequence belongs to the CRWN family. Core component of the LINC complex which is composed of inner nuclear membrane SUN domain-containing proteins coupled to outer nuclear membrane WIP proteins, the nucleoskeletal CRWN/LINC proteins, and, possibly, KAKU4. Expressed at low levels in roots, leaves, flowers and flower stalks.

The protein localises to the nucleus membrane. Its subcellular location is the nucleus. The protein resides in the nucleoplasm. It is found in the cytoplasm. It localises to the nucleus lamina. Component of SUN-protein-containing multivariate complexes also called LINC complexes which link the nucleoskeleton and cytoskeleton by providing versatile outer nuclear membrane attachment sites for cytoskeletal filaments. Required for nucleus structure organization (e.g. size and shape). This is Protein CROWDED NUCLEI 3 from Arabidopsis thaliana (Mouse-ear cress).